A 233-amino-acid chain; its full sequence is Orotidine 5'-phosphate decarboxylase (233 aa).

Substrate-binding positions include D9, K31, 58-67 (DLKLHDIPNT), T120, R182, Q191, G211, and R212. K60 (proton donor) is an active-site residue.

Belongs to the OMP decarboxylase family. Type 1 subfamily. As to quaternary structure, homodimer.

The catalysed reaction is orotidine 5'-phosphate + H(+) = UMP + CO2. Its pathway is pyrimidine metabolism; UMP biosynthesis via de novo pathway; UMP from orotate: step 2/2. Catalyzes the decarboxylation of orotidine 5'-monophosphate (OMP) to uridine 5'-monophosphate (UMP). The chain is Orotidine 5'-phosphate decarboxylase from Listeria welshimeri serovar 6b (strain ATCC 35897 / DSM 20650 / CCUG 15529 / CIP 8149 / NCTC 11857 / SLCC 5334 / V8).